A 449-amino-acid chain; its full sequence is Telomere resolvase ResT (449 aa).

Requires No cofactors were found to be necessary. as cofactor.

Its subcellular location is the cytoplasm. The protein localises to the nucleoid. Catalyzes the conservative, sequence-specific DNA breakage and reunion reaction that generates two hairpin telomeres from a replicated telomere substrate. Breaks two phosphodiester bonds in a single DNA duplex and joins each end with the opposite DNA strand to form covalently closed hairpin telomeres. In vitro relaxed-circular, open-circular and linearized plasmids, but not supercoiled DNA, are all substrates. Cleavage is position-dependent relative to conserved sequence elements. The sequence is that of Telomere resolvase ResT from Borreliella burgdorferi (strain ATCC 35210 / DSM 4680 / CIP 102532 / B31) (Borrelia burgdorferi).